We begin with the raw amino-acid sequence, 188 residues long: HTH-type transcriptional regulator QacR (188 aa).

The region spanning 1–61 (MNLKDKILGV…EILNIEESKW (61 aa)) is the HTH tetR-type domain. Positions 24–43 (TTGEIVKLSESSKGNLYYHF) form a DNA-binding region, H-T-H motif.

As to quaternary structure, homodimer. Binds cooperatively to DNA as a pair of dimers.

Its function is as follows. Transcriptional repressor of qacA. Binds to IR1, an unusually long 28 bp operator, which is located downstream from the qacA promoter and overlaps its transcription start site. QacR is induced from its IR1 site by binding to one of many structurally dissimilar cationic lipophilic compounds, which are also substrates of QacA. The protein is HTH-type transcriptional regulator QacR (qacR) of Staphylococcus aureus (strain Mu50 / ATCC 700699).